The primary structure comprises 475 residues: Putative aldehyde dehydrogenase (475 aa).

Residues 146-147 and 223-224 contribute to the NAD(+) site; these read WN and GS. Glu-245 serves as the catalytic Proton acceptor. Residue Leu-246 participates in NAD(+) binding. The Nucleophile role is filled by Cys-279. Glu-379 is a binding site for NAD(+).

It belongs to the aldehyde dehydrogenase family.

It carries out the reaction an aldehyde + NAD(+) + H2O = a carboxylate + NADH + 2 H(+). In Staphylococcus aureus (strain MSSA476), this protein is Putative aldehyde dehydrogenase.